Here is a 212-residue protein sequence, read N- to C-terminus: Pyridoxine/pyridoxamine 5'-phosphate oxidase (212 aa).

Substrate-binding positions include 8 to 11 (RREY) and lysine 66. FMN is bound by residues 61–66 (RIVLLK), 76–77 (FT), arginine 82, lysine 83, and glutamine 105. Substrate-binding residues include tyrosine 123, arginine 127, and serine 131. Residues 140-141 (QS) and tryptophan 185 contribute to the FMN site. 191-193 (RLH) serves as a coordination point for substrate. Position 195 (arginine 195) interacts with FMN.

Belongs to the pyridoxamine 5'-phosphate oxidase family. In terms of assembly, homodimer. The cofactor is FMN.

It catalyses the reaction pyridoxamine 5'-phosphate + O2 + H2O = pyridoxal 5'-phosphate + H2O2 + NH4(+). The catalysed reaction is pyridoxine 5'-phosphate + O2 = pyridoxal 5'-phosphate + H2O2. It functions in the pathway cofactor metabolism; pyridoxal 5'-phosphate salvage; pyridoxal 5'-phosphate from pyridoxamine 5'-phosphate: step 1/1. Its pathway is cofactor metabolism; pyridoxal 5'-phosphate salvage; pyridoxal 5'-phosphate from pyridoxine 5'-phosphate: step 1/1. Functionally, catalyzes the oxidation of either pyridoxine 5'-phosphate (PNP) or pyridoxamine 5'-phosphate (PMP) into pyridoxal 5'-phosphate (PLP). In Shewanella sp. (strain ANA-3), this protein is Pyridoxine/pyridoxamine 5'-phosphate oxidase.